The following is a 285-amino-acid chain: Flagellar filament core protein flaB2 (285 aa).

It belongs to the bacterial flagellin family. In terms of assembly, the flagellum consists of an outer layer composed of two sheath proteins, flaA1 (44 kDa) and flaA2 (35 kDa) around a core that contains three proteins flaB1 (37 kDa), flaB2 (34 kDa) and flaB3 (32 kDa).

The protein resides in the periplasmic flagellum. The protein localises to the periplasm. Its function is as follows. Component of the core of the flagella. This Brachyspira hyodysenteriae (Treponema hyodysenteriae) protein is Flagellar filament core protein flaB2 (flaB2).